Consider the following 626-residue polypeptide: DNA-directed RNA polymerase subunit beta C-terminal section (626 aa).

A disordered region spans residues 287-307; sequence NTKSKNTGKGSKPPRASKAQN.

It belongs to the RNA polymerase beta chain family. In terms of assembly, in plastids the minimal PEP RNA polymerase catalytic core is composed of four subunits: alpha, beta, beta', and beta''. When a (nuclear-encoded) sigma factor is associated with the core the holoenzyme is formed, which can initiate transcription.

The protein resides in the plastid. The protein localises to the chloroplast. The enzyme catalyses RNA(n) + a ribonucleoside 5'-triphosphate = RNA(n+1) + diphosphate. DNA-dependent RNA polymerase catalyzes the transcription of DNA into RNA using the four ribonucleoside triphosphates as substrates. This is DNA-directed RNA polymerase subunit beta C-terminal section (rpoB2) from Chlamydomonas reinhardtii (Chlamydomonas smithii).